The sequence spans 210 residues: Protein GrpE (210 aa).

The segment covering 1 to 12 has biased composition (basic and acidic residues); it reads MSDQAKDERAPS. 2 disordered regions span residues 1 to 26 and 191 to 210; these read MSDQ…RTEG and IAAE…EKDA.

This sequence belongs to the GrpE family. As to quaternary structure, homodimer.

The protein resides in the cytoplasm. Participates actively in the response to hyperosmotic and heat shock by preventing the aggregation of stress-denatured proteins, in association with DnaK and GrpE. It is the nucleotide exchange factor for DnaK and may function as a thermosensor. Unfolded proteins bind initially to DnaJ; upon interaction with the DnaJ-bound protein, DnaK hydrolyzes its bound ATP, resulting in the formation of a stable complex. GrpE releases ADP from DnaK; ATP binding to DnaK triggers the release of the substrate protein, thus completing the reaction cycle. Several rounds of ATP-dependent interactions between DnaJ, DnaK and GrpE are required for fully efficient folding. In Mesorhizobium japonicum (strain LMG 29417 / CECT 9101 / MAFF 303099) (Mesorhizobium loti (strain MAFF 303099)), this protein is Protein GrpE.